We begin with the raw amino-acid sequence, 79 residues long: Acyl carrier protein (79 aa).

The Carrier domain maps to 2-77; it reads SDIEARVRKI…HAIDYIKSNA (76 aa). O-(pantetheine 4'-phosphoryl)serine is present on Ser-37.

This sequence belongs to the acyl carrier protein (ACP) family. 4'-phosphopantetheine is transferred from CoA to a specific serine of apo-ACP by AcpS. This modification is essential for activity because fatty acids are bound in thioester linkage to the sulfhydryl of the prosthetic group.

Its subcellular location is the cytoplasm. Its pathway is lipid metabolism; fatty acid biosynthesis. Carrier of the growing fatty acid chain in fatty acid biosynthesis. The protein is Acyl carrier protein of Xylella fastidiosa (strain M23).